The following is a 693-amino-acid chain: Polyribonucleotide nucleotidyltransferase (693 aa).

Residues Asp487 and Asp493 each coordinate Mg(2+). The region spanning 554 to 613 is the KH domain; sequence PRIYTIKINPEKIKDVIGKGGSIIRMLTEETGTVIEIKDDGIVKISAINGEKAKYAIKRI. Residues 623–691 form the S1 motif domain; sequence GKIYSGKVTR…RQGRIRLSMK (69 aa).

The protein belongs to the polyribonucleotide nucleotidyltransferase family. Component of the RNA degradosome, which is a multiprotein complex involved in RNA processing and mRNA degradation. It depends on Mg(2+) as a cofactor.

The protein localises to the cytoplasm. The catalysed reaction is RNA(n+1) + phosphate = RNA(n) + a ribonucleoside 5'-diphosphate. In terms of biological role, involved in mRNA degradation. Catalyzes the phosphorolysis of single-stranded polyribonucleotides processively in the 3'- to 5'-direction. This chain is Polyribonucleotide nucleotidyltransferase, found in Buchnera aphidicola subsp. Cinara cedri (strain Cc).